We begin with the raw amino-acid sequence, 203 residues long: Urease accessory protein UreG (203 aa).

14–21 is a binding site for GTP; the sequence is GPVGSGKT.

It belongs to the SIMIBI class G3E GTPase family. UreG subfamily. In terms of assembly, homodimer. UreD, UreF and UreG form a complex that acts as a GTP-hydrolysis-dependent molecular chaperone, activating the urease apoprotein by helping to assemble the nickel containing metallocenter of UreC. The UreE protein probably delivers the nickel.

It localises to the cytoplasm. Functionally, facilitates the functional incorporation of the urease nickel metallocenter. This process requires GTP hydrolysis, probably effectuated by UreG. In Rhizobium leguminosarum bv. trifolii (strain WSM2304), this protein is Urease accessory protein UreG.